A 393-amino-acid chain; its full sequence is Staphopain B (393 aa).

An N-terminal signal peptide occupies residues methionine 1–alanine 36. The propeptide occupies aspartate 37 to glutamate 219. Active-site residues include cysteine 243, histidine 340, and asparagine 360.

It belongs to the peptidase C47 family. In terms of assembly, in the cytoplasm, prematurely activated/folded SspB forms a stable non-covalent complex with SspC. Post-translationally, proteolytically cleaved by staphylococcal serine protease (SspA).

It localises to the secreted. With respect to regulation, prematurely activated/folded staphopain B is inhibited by staphostatin B (SspC), which is probably required to protect staphylococcal cytoplasmic proteins from degradation by SspB. In terms of biological role, cysteine protease that plays an important role in the inhibition of host innate immune response. Degrades host elastin, fibrogen, fibronectin and kininogen. Blocks phagocytosis of opsonised S.aureus by neutrophils and monocytes by inducing their death in a proteolytic activity-dependent manner. Decreases surface expression of the 'don't eat me' signal CD31 on neutrophils. Cleaves host galectin-3/LGALS3, thereby inhibiting the neutrophil-activating ability of the lectin. This Staphylococcus aureus (strain MRSA252) protein is Staphopain B (sspB).